The sequence spans 363 residues: Circumsporozoite protein (363 aa).

The signal sequence occupies residues 1–22; it reads MKNFILLAVSSILLVDLLPTHF. Residues 48 to 57 show a composition bias toward polar residues; the sequence is GAQQVRQSAS. The interval 48–278 is disordered; that stretch reads GAQQVRQSAS…GQNNQGANAP (231 aa). Positions 61-96 are enriched in basic and acidic residues; the sequence is GLGEKPKEGADKEKKKEKGKEKEEEPKKPNENKLKQ. Residues 80–88 form a required for the binding to heparan sulfate proteoglycans (HSPGs) on the surface of host hepatocytes region; that stretch reads KEKEEEPKK. The tract at residues 93–97 is region I; contains the proteolytic cleavage site; the sequence is KLKQP. The stretch at 98–109 is one 1; approximate repeat; sequence NEGQPQAQGDGA. Residues 98–241 form a 12 X 12 AA approximate tandem repeats of N-A-G-Q-P-Q-A-Q-G-D-G-A region; it reads NEGQPQAQGD…GQPQAQGDGA (144 aa). Repeat copies occupy residues 110-121, 122-133, 134-145, 146-157, 158-169, 170-181, 182-193, 194-205, 206-217, 218-229, and 230-241. The segment covering 248–259 has biased composition (gly residues); sequence RNGGGAPAGGNE. Low complexity predominate over residues 260 to 277; sequence GNKQAGKGQGQNNQGANA. The TSP type-1 domain maps to 289–341; sequence KIRSSVTTEWTPCSVTCGNGVRIRRKAHAGNKKAEDLTMDDLEVEACVMDKCA. 2 cysteine pairs are disulfide-bonded: C301-C335 and C305-C340. T304 carries an O-linked (Fuc) threonine glycan. C340 carries GPI-anchor amidated cysteine lipidation. Positions 341–363 are cleaved as a propeptide — removed in mature form; that stretch reads AGIFNVVSNSLGLVILLVLALFN.

This sequence belongs to the plasmodium circumsporozoite protein family. During host cell invasion, proteolytically cleaved at the cell membrane in the region I by a papain-like cysteine protease of parasite origin. Cleavage is triggered by the sporozoite contact with highly sulfated heparan sulfate proteoglycans (HSPGs) present on the host hepatocyte cell surface. Cleavage exposes the TSP type-1 (TSR) domain and is required for productive invasion of host hepatocytes but not for adhesion to the host cell membrane. Cleavage is dispensable for sporozoite development in the oocyst, motility and for traversal of host and vector cells. In terms of processing, O-glycosylated; maybe by POFUT2.

It localises to the cell membrane. The protein resides in the cytoplasm. In terms of biological role, essential sporozoite protein. In the mosquito vector, required for sporozoite development in the oocyst, migration through the vector hemolymph and entry into the vector salivary glands. In the vertebrate host, required for sporozoite migration through the host dermis and infection of host hepatocytes. Binds to highly sulfated heparan sulfate proteoglycans (HSPGs) on the surface of host hepatocytes. Functionally, in the vertebrate host, binds to highly sulfated heparan sulfate proteoglycans (HSPGs) on the surface of host hepatocytes and is required for sporozoite invasion of the host hepatocytes. This is Circumsporozoite protein from Plasmodium knowlesi (strain H).